The sequence spans 204 residues: Small ribosomal subunit protein uS4 (204 aa).

The S4 RNA-binding domain maps to 93-156 (SRLSSVLYHS…AKIPILIEAE (64 aa)).

Belongs to the universal ribosomal protein uS4 family. In terms of assembly, part of the 30S ribosomal subunit. Contacts protein S5. The interaction surface between S4 and S5 is involved in control of translational fidelity.

One of the primary rRNA binding proteins, it binds directly to 16S rRNA where it nucleates assembly of the body of the 30S subunit. Functionally, with S5 and S12 plays an important role in translational accuracy. The protein is Small ribosomal subunit protein uS4 of Wolbachia pipientis subsp. Culex pipiens (strain wPip).